The chain runs to 122 residues: Large ribosomal subunit protein bL12 (122 aa).

The protein belongs to the bacterial ribosomal protein bL12 family. Homodimer. Part of the ribosomal stalk of the 50S ribosomal subunit. Forms a multimeric L10(L12)X complex, where L10 forms an elongated spine to which 2 to 4 L12 dimers bind in a sequential fashion. Binds GTP-bound translation factors.

Its function is as follows. Forms part of the ribosomal stalk which helps the ribosome interact with GTP-bound translation factors. Is thus essential for accurate translation. This is Large ribosomal subunit protein bL12 from Mesoplasma florum (strain ATCC 33453 / NBRC 100688 / NCTC 11704 / L1) (Acholeplasma florum).